Consider the following 226-residue polypeptide: Thiopurine S-methyltransferase (226 aa).

S-adenosyl-L-methionine-binding residues include Trp-16, Met-51, Glu-72, and Arg-131.

The protein belongs to the class I-like SAM-binding methyltransferase superfamily. TPMT family.

The protein resides in the cytoplasm. The catalysed reaction is S-adenosyl-L-methionine + a thiopurine = S-adenosyl-L-homocysteine + a thiopurine S-methylether.. The sequence is that of Thiopurine S-methyltransferase from Francisella tularensis subsp. novicida (strain U112).